A 318-amino-acid chain; its full sequence is Ribose-phosphate pyrophosphokinase (318 aa).

Residues 46–48 (DGE) and 105–106 (RQ) contribute to the ATP site. Mg(2+) is bound by residues His-139 and Asp-178. Lys-201 is an active-site residue. Residues Arg-203, Asp-227, and 231-235 (DTAGT) contribute to the D-ribose 5-phosphate site.

The protein belongs to the ribose-phosphate pyrophosphokinase family. Class I subfamily. Homohexamer. Mg(2+) serves as cofactor.

The protein resides in the cytoplasm. It catalyses the reaction D-ribose 5-phosphate + ATP = 5-phospho-alpha-D-ribose 1-diphosphate + AMP + H(+). It participates in metabolic intermediate biosynthesis; 5-phospho-alpha-D-ribose 1-diphosphate biosynthesis; 5-phospho-alpha-D-ribose 1-diphosphate from D-ribose 5-phosphate (route I): step 1/1. Its function is as follows. Involved in the biosynthesis of the central metabolite phospho-alpha-D-ribosyl-1-pyrophosphate (PRPP) via the transfer of pyrophosphoryl group from ATP to 1-hydroxyl of ribose-5-phosphate (Rib-5-P). This is Ribose-phosphate pyrophosphokinase from Helicobacter pylori (strain J99 / ATCC 700824) (Campylobacter pylori J99).